The primary structure comprises 156 residues: Small ribosomal subunit protein uS7 (156 aa).

It belongs to the universal ribosomal protein uS7 family. Part of the 30S ribosomal subunit. Contacts proteins S9 and S11.

Its function is as follows. One of the primary rRNA binding proteins, it binds directly to 16S rRNA where it nucleates assembly of the head domain of the 30S subunit. Is located at the subunit interface close to the decoding center, probably blocks exit of the E-site tRNA. The sequence is that of Small ribosomal subunit protein uS7 from Azoarcus sp. (strain BH72).